A 469-amino-acid polypeptide reads, in one-letter code: 24-hydroxycholesterol 7-alpha-hydroxylase (469 aa).

The N-terminal stretch at 1–23 is a signal peptide; sequence MELISPTVIIILGCLALFLLLQR. 3 helical membrane-spanning segments follow: residues 267-287, 352-372, and 412-432; these read GLLL…WTLA, VEIL…PFWL, and FQCP…ILIL. Heme is bound at residue Cys414.

Belongs to the cytochrome P450 family. It depends on heme as a cofactor. As to expression, liver specific.

The protein resides in the endoplasmic reticulum membrane. It is found in the microsome membrane. The catalysed reaction is (24S)-hydroxycholesterol + reduced [NADPH--hemoprotein reductase] + O2 = (24S)-7alpha-dihydroxycholesterol + oxidized [NADPH--hemoprotein reductase] + H2O + H(+). It participates in steroid metabolism; cholesterol degradation. It functions in the pathway lipid metabolism; bile acid biosynthesis. Its function is as follows. A cytochrome P450 monooxygenase involved in neural cholesterol clearance through bile acid synthesis. Catalyzes 7-alpha hydroxylation of (24S)-hydroxycholesterol, a neural oxysterol that is metabolized to bile acids in the liver. Mechanistically, uses molecular oxygen inserting one oxygen atom into a substrate, and reducing the second into a water molecule, with two electrons provided by NADPH via cytochrome P450 reductase (CPR; NADPH-ferrihemoprotein reductase). This chain is 24-hydroxycholesterol 7-alpha-hydroxylase, found in Homo sapiens (Human).